The following is a 131-amino-acid chain: Sec-independent protein translocase protein TatB (131 aa).

The chain crosses the membrane as a helical span at residues 2-22 (FANIGWWEMLVLVMVGLVVLG). Residues 90–131 (DSLFTGDFDRPTPKKPDAAGSAGPDATEQIGAGPIPFDSDAT) are disordered. A compositionally biased stretch (basic and acidic residues) spans 96–106 (DFDRPTPKKPD).

This sequence belongs to the TatB family. The Tat system comprises two distinct complexes: a TatABC complex, containing multiple copies of TatA, TatB and TatC subunits, and a separate TatA complex, containing only TatA subunits. Substrates initially bind to the TatABC complex, which probably triggers association of the separate TatA complex to form the active translocon.

Its subcellular location is the cell membrane. Functionally, part of the twin-arginine translocation (Tat) system that transports large folded proteins containing a characteristic twin-arginine motif in their signal peptide across membranes. Together with TatC, TatB is part of a receptor directly interacting with Tat signal peptides. TatB may form an oligomeric binding site that transiently accommodates folded Tat precursor proteins before their translocation. This Mycobacterium tuberculosis (strain ATCC 25177 / H37Ra) protein is Sec-independent protein translocase protein TatB.